Reading from the N-terminus, the 426-residue chain is 3-phosphoshikimate 1-carboxyvinyltransferase (426 aa).

Lys-22, Ser-23, and Arg-27 together coordinate 3-phosphoshikimate. Phosphoenolpyruvate is bound at residue Lys-22. Gly-96 and Arg-124 together coordinate phosphoenolpyruvate. 3-phosphoshikimate is bound by residues Ser-170, Ser-171, Gln-172, Ser-198, Asp-314, Asn-337, and Lys-341. A phosphoenolpyruvate-binding site is contributed by Gln-172. Asp-314 (proton acceptor) is an active-site residue. Arg-345, Arg-387, and Lys-412 together coordinate phosphoenolpyruvate.

Belongs to the EPSP synthase family. Monomer.

It is found in the cytoplasm. The catalysed reaction is 3-phosphoshikimate + phosphoenolpyruvate = 5-O-(1-carboxyvinyl)-3-phosphoshikimate + phosphate. It participates in metabolic intermediate biosynthesis; chorismate biosynthesis; chorismate from D-erythrose 4-phosphate and phosphoenolpyruvate: step 6/7. Its function is as follows. Catalyzes the transfer of the enolpyruvyl moiety of phosphoenolpyruvate (PEP) to the 5-hydroxyl of shikimate-3-phosphate (S3P) to produce enolpyruvyl shikimate-3-phosphate and inorganic phosphate. The sequence is that of 3-phosphoshikimate 1-carboxyvinyltransferase from Colwellia psychrerythraea (strain 34H / ATCC BAA-681) (Vibrio psychroerythus).